We begin with the raw amino-acid sequence, 183 residues long: GTP cyclohydrolase 1 (183 aa).

3 residues coordinate Zn(2+): Cys71, His74, and Cys142.

This sequence belongs to the GTP cyclohydrolase I family. Homomer.

The catalysed reaction is GTP + H2O = 7,8-dihydroneopterin 3'-triphosphate + formate + H(+). It functions in the pathway cofactor biosynthesis; 7,8-dihydroneopterin triphosphate biosynthesis; 7,8-dihydroneopterin triphosphate from GTP: step 1/1. This is GTP cyclohydrolase 1 from Leptospira biflexa serovar Patoc (strain Patoc 1 / Ames).